The chain runs to 428 residues: UPF0761 membrane protein TERTU_3006 (428 aa).

The next 7 membrane-spanning stretches (helical) occupy residues 47 to 67 (LFAL…IPAF), 104 to 124 (LSGV…RNIE), 143 to 163 (YLLY…AFLL), 189 to 209 (VVPW…VPNC), 218 to 238 (IGGV…GYIV), 248 to 268 (GAFA…TIIL), and 292 to 312 (MIVV…GESV).

The protein belongs to the UPF0761 family.

Its subcellular location is the cell inner membrane. This chain is UPF0761 membrane protein TERTU_3006, found in Teredinibacter turnerae (strain ATCC 39867 / T7901).